Consider the following 265-residue polypeptide: MIESQRHSYHLVDPSPWPISGSLGALATTVGGVMYMHSFQGGATLLSLGLIFILYTMFVWWRDVLRESTLEGHHTKVVQLGPRYGSISFIVSEVMFLFAFFRASSHSSLAPTVEIGGIWPPKGIGVLDPREIPFLNTPILLSSGAAVTWAHHAILAGKEKRAVYALVATVSLALVFTGFQGMEYYQAPFTISDSIYGSTFFLATGFHGFHVIIGTLFLIICGIRQYLGQMTKEHHVGFEAAAWYWHFVDVVRLFPFVSIYWWGGI.

7 helical membrane passes run 16-36, 41-61, 81-101, 137-157, 162-182, 200-220, and 245-265; these read PWPI…VMYM, GGAT…FVWW, GPRY…FAFF, TPIL…ILAG, AVYA…FQGM, FFLA…FLII, and WHFV…WGGI.

It belongs to the cytochrome c oxidase subunit 3 family. As to quaternary structure, component of the cytochrome c oxidase (complex IV, CIV), a multisubunit enzyme composed of a catalytic core of 3 subunits and several supernumerary subunits. The complex exists as a monomer or a dimer and forms supercomplexes (SCs) in the inner mitochondrial membrane with ubiquinol-cytochrome c oxidoreductase (cytochrome b-c1 complex, complex III, CIII).

The protein resides in the mitochondrion inner membrane. It catalyses the reaction 4 Fe(II)-[cytochrome c] + O2 + 8 H(+)(in) = 4 Fe(III)-[cytochrome c] + 2 H2O + 4 H(+)(out). Its function is as follows. Component of the cytochrome c oxidase, the last enzyme in the mitochondrial electron transport chain which drives oxidative phosphorylation. The respiratory chain contains 3 multisubunit complexes succinate dehydrogenase (complex II, CII), ubiquinol-cytochrome c oxidoreductase (cytochrome b-c1 complex, complex III, CIII) and cytochrome c oxidase (complex IV, CIV), that cooperate to transfer electrons derived from NADH and succinate to molecular oxygen, creating an electrochemical gradient over the inner membrane that drives transmembrane transport and the ATP synthase. Cytochrome c oxidase is the component of the respiratory chain that catalyzes the reduction of oxygen to water. Electrons originating from reduced cytochrome c in the intermembrane space (IMS) are transferred via the dinuclear copper A center (CU(A)) of subunit 2 and heme A of subunit 1 to the active site in subunit 1, a binuclear center (BNC) formed by heme A3 and copper B (CU(B)). The BNC reduces molecular oxygen to 2 water molecules using 4 electrons from cytochrome c in the IMS and 4 protons from the mitochondrial matrix. In Vicia faba (Broad bean), this protein is Cytochrome c oxidase subunit 3 (COX3).